A 167-amino-acid chain; its full sequence is Translationally-controlled tumor protein homolog (167 aa).

Residues methionine 1 to isoleucine 167 form the TCTP domain.

Belongs to the TCTP family.

The protein localises to the cytoplasm. Its subcellular location is the cytoskeleton. In terms of biological role, involved in protein synthesis. Involved in microtubule stabilization. This chain is Translationally-controlled tumor protein homolog, found in Yarrowia lipolytica (strain CLIB 122 / E 150) (Yeast).